The primary structure comprises 149 residues: Nucleoside diphosphate kinase (149 aa).

K9, F57, R85, T91, R102, and N112 together coordinate ATP. H115 serves as the catalytic Pros-phosphohistidine intermediate.

Belongs to the NDK family. Mg(2+) serves as cofactor.

It localises to the cytoplasm. The catalysed reaction is a 2'-deoxyribonucleoside 5'-diphosphate + ATP = a 2'-deoxyribonucleoside 5'-triphosphate + ADP. It carries out the reaction a ribonucleoside 5'-diphosphate + ATP = a ribonucleoside 5'-triphosphate + ADP. Major role in the synthesis of nucleoside triphosphates other than ATP. The ATP gamma phosphate is transferred to the NDP beta phosphate via a ping-pong mechanism, using a phosphorylated active-site intermediate. The sequence is that of Nucleoside diphosphate kinase from Methanocorpusculum labreanum (strain ATCC 43576 / DSM 4855 / Z).